We begin with the raw amino-acid sequence, 215 residues long: UPF0502 protein YceH (215 aa).

Lys80 is subject to N6-acetyllysine.

Belongs to the UPF0502 family.

The chain is UPF0502 protein YceH from Shigella boydii serotype 18 (strain CDC 3083-94 / BS512).